A 366-amino-acid chain; its full sequence is tRNA(Met) cytidine acetate ligase (366 aa).

ATP-binding positions include 7-20, glycine 96, asparagine 152, and arginine 175; that span reads IAEFNPFHNGHKYL.

This sequence belongs to the TmcAL family.

The protein localises to the cytoplasm. It carries out the reaction cytidine(34) in elongator tRNA(Met) + acetate + ATP = N(4)-acetylcytidine(34) in elongator tRNA(Met) + AMP + diphosphate. Catalyzes the formation of N(4)-acetylcytidine (ac(4)C) at the wobble position of elongator tRNA(Met), using acetate and ATP as substrates. First activates an acetate ion to form acetyladenylate (Ac-AMP) and then transfers the acetyl group to tRNA to form ac(4)C34. The protein is tRNA(Met) cytidine acetate ligase of Streptococcus mutans serotype c (strain ATCC 700610 / UA159).